Consider the following 126-residue polypeptide: Small ribosomal subunit protein uS13 (126 aa).

The tract at residues 92 to 126 (HRRGLPVRGQRTKTNARTRKGPKRTVAGKKKAGRK) is disordered.

The protein belongs to the universal ribosomal protein uS13 family. In terms of assembly, part of the 30S ribosomal subunit. Forms a loose heterodimer with protein S19. Forms two bridges to the 50S subunit in the 70S ribosome.

Located at the top of the head of the 30S subunit, it contacts several helices of the 16S rRNA. In the 70S ribosome it contacts the 23S rRNA (bridge B1a) and protein L5 of the 50S subunit (bridge B1b), connecting the 2 subunits; these bridges are implicated in subunit movement. Contacts the tRNAs in the A and P-sites. This Kineococcus radiotolerans (strain ATCC BAA-149 / DSM 14245 / SRS30216) protein is Small ribosomal subunit protein uS13.